We begin with the raw amino-acid sequence, 113 residues long: Ribosome-binding factor A (113 aa).

The protein belongs to the RbfA family. Monomer. Binds 30S ribosomal subunits, but not 50S ribosomal subunits or 70S ribosomes.

The protein localises to the cytoplasm. Its function is as follows. One of several proteins that assist in the late maturation steps of the functional core of the 30S ribosomal subunit. Associates with free 30S ribosomal subunits (but not with 30S subunits that are part of 70S ribosomes or polysomes). Required for efficient processing of 16S rRNA. May interact with the 5'-terminal helix region of 16S rRNA. The protein is Ribosome-binding factor A of Mycoplasmopsis agalactiae (strain NCTC 10123 / CIP 59.7 / PG2) (Mycoplasma agalactiae).